The following is a 264-amino-acid chain: Indole-3-glycerol phosphate synthase (264 aa).

It belongs to the TrpC family.

It catalyses the reaction 1-(2-carboxyphenylamino)-1-deoxy-D-ribulose 5-phosphate + H(+) = (1S,2R)-1-C-(indol-3-yl)glycerol 3-phosphate + CO2 + H2O. It participates in amino-acid biosynthesis; L-tryptophan biosynthesis; L-tryptophan from chorismate: step 4/5. The chain is Indole-3-glycerol phosphate synthase from Stenotrophomonas maltophilia (strain K279a).